We begin with the raw amino-acid sequence, 457 residues long: MEGNLKNVLVLSFGFLLLFTAYGGLQSLQSSLYSEEGLGVAALSTLYGGMLLSSMFLPPVLIGKLGCKWTLVLAMCCYVAFSLGNFYASWYTLIPASVLVGLGAAALWSAQGTYLTIVGNMQARKTGQVGKDVVSQYFGIFFLIFQSSGVWGNLISSLVFGQMPTQGTIPEEQLQACGASDCLMATLSANSTNRPSQDLIYTLLGIYTGCGFLAVLLMAVFLEPVRDAQPEGEDEKQAPPFWSTLLSTFKLLRDKRLRLLILLPMLSGFEQAFLSGDYTRSYTTCALGIQFVGYVMICFGAADALCSVLFGRLARHTGRTVLFALGAVTQLACIIALLLWKPHPSQLPVFFVFPSLWGMADAVWQTQNNALFGVLFEKNKEAAFANYRLWEALGFVIAFGYSTFLCVSVKLYVLLGVLSAAMAAYGAVEYTESRKADGPLAAGRTKPAEDGATQTKL.

Transmembrane regions (helical) follow at residues 8–28 (VLVL…LQSL), 42–62 (ALST…PVLI), 65–85 (LGCK…SLGN), 86–106 (FYAS…GAAA), and 140–160 (IFFL…SLVF). Residue Asn-190 is glycosylated (N-linked (GlcNAc...) asparagine). Helical transmembrane passes span 202–222 (TLLG…AVFL), 257–277 (LRLL…LSGD), 291–311 (FVGY…VLFG), 320–340 (TVLF…LLLW), 344–364 (PSQL…DAVW), and 395–415 (FVIA…YVLL). The segment at 438 to 457 (GPLAAGRTKPAEDGATQTKL) is disordered.

This sequence belongs to the unc-93 family.

It is found in the cell membrane. The sequence is that of Protein unc-93 homolog A (UNC93A) from Bos taurus (Bovine).